We begin with the raw amino-acid sequence, 468 residues long: GTPase Der (468 aa).

EngA-type G domains are found at residues 3-169 (PVMA…SPPD) and 199-372 (IRLA…KAAT). GTP contacts are provided by residues 9–16 (GRANVGKS), 56–60 (DTGGF), 119–122 (NKAE), 205–212 (GRPNVGKS), 252–256 (DTAGL), and 317–320 (NKWD). One can recognise a KH-like domain in the interval 373–457 (CKMSTPVLTR…PLRIELKTSH (85 aa)).

It belongs to the TRAFAC class TrmE-Era-EngA-EngB-Septin-like GTPase superfamily. EngA (Der) GTPase family. Associates with the 50S ribosomal subunit.

Functionally, GTPase that plays an essential role in the late steps of ribosome biogenesis. This is GTPase Der from Verminephrobacter eiseniae (strain EF01-2).